The sequence spans 614 residues: Sulfite reductase [NADPH] flavoprotein alpha-component (614 aa).

One can recognise a Flavodoxin-like domain in the interval 79-217 (LTIIFASQTG…AATEWRKQVL (139 aa)). FMN contacts are provided by residues 85–90 (SQTGNA), 132–135 (STNG), and 168–177 (LGDSSYQFFC). In terms of domain architecture, FAD-binding FR-type spans 249–463 (EQPYTASLST…VEHNNNFKLP (215 aa)). Residues Thr337, Thr371, 401-404 (RLYS), 419-421 (TVG), Tyr425, and 434-437 (GGAS) contribute to the FAD site. NADP(+) contacts are provided by residues 534–535 (SR), 540–544 (KVYVQ), and Asp576. Residue Tyr614 coordinates FAD.

It belongs to the NADPH-dependent sulphite reductase flavoprotein subunit CysJ family. The protein in the N-terminal section; belongs to the flavodoxin family. This sequence in the C-terminal section; belongs to the flavoprotein pyridine nucleotide cytochrome reductase family. As to quaternary structure, alpha(8)-beta(8). The alpha component is a flavoprotein, the beta component is a hemoprotein. It depends on FAD as a cofactor. FMN is required as a cofactor.

It catalyses the reaction hydrogen sulfide + 3 NADP(+) + 3 H2O = sulfite + 3 NADPH + 4 H(+). It functions in the pathway sulfur metabolism; hydrogen sulfide biosynthesis; hydrogen sulfide from sulfite (NADPH route): step 1/1. Its function is as follows. Component of the sulfite reductase complex that catalyzes the 6-electron reduction of sulfite to sulfide. This is one of several activities required for the biosynthesis of L-cysteine from sulfate. The flavoprotein component catalyzes the electron flow from NADPH -&gt; FAD -&gt; FMN to the hemoprotein component. The polypeptide is Sulfite reductase [NADPH] flavoprotein alpha-component (Vibrio cholerae serotype O1 (strain ATCC 39541 / Classical Ogawa 395 / O395)).